The chain runs to 446 residues: MREIVHLQAGQCGNQIGSKFWEVISDEHGIDPTGSYHGDSDLQLDRINVYYNEASGGKYVPRAVLVDLEPGTMDSVRSGPFGQIFRPDNFVFGQSGAGNNWAKGHYTEGAELVDSVLDVVRKEAEGCDCLQGFQLTHSLGGGTGSGMGTLLISKIREEYPDRIMNTFSVVPSPKVSDTVVEPYNATLSVHQLVENTDETFCIDNEALYDICFRTLKLTTPTYGDLNHLVSATMSGVTTCLRFPGQLNADLRKLAVNMVPFPRLHFFIPGFAPLTSRGGQQYRSLTVPELTQQMFDSKNMMAACDPRHGRYLTVAAIFRGRMSMKEVDEQMLNAQNKNSSYFVEWIPNNVKTAVCDIPPRGLKMAATFIGNSTAIQELFKRISEQFTAMFRRKAFLHWYTGEGMDEMEFTEAESNMNDLVSEYQQYQDATAEEEGEFEEEGEYEDGA.

An MREI motif motif is present at residues 1–4 (MREI). GTP-binding residues include Gln-11, Glu-69, Ser-138, Gly-142, Thr-143, Gly-144, Asn-204, and Asn-226. Glu-69 is a binding site for Mg(2+). Residues 426 to 446 (QDATAEEEGEFEEEGEYEDGA) form a disordered region. Acidic residues predominate over residues 429-446 (TAEEEGEFEEEGEYEDGA). Residue Glu-438 is modified to 5-glutamyl polyglutamate.

It belongs to the tubulin family. In terms of assembly, dimer of alpha and beta chains. A typical microtubule is a hollow water-filled tube with an outer diameter of 25 nm and an inner diameter of 15 nM. Alpha-beta heterodimers associate head-to-tail to form protofilaments running lengthwise along the microtubule wall with the beta-tubulin subunit facing the microtubule plus end conferring a structural polarity. Microtubules usually have 13 protofilaments but different protofilament numbers can be found in some organisms and specialized cells. Requires Mg(2+) as cofactor. In terms of processing, some glutamate residues at the C-terminus are polyglycylated, resulting in polyglycine chains on the gamma-carboxyl group. Glycylation is mainly limited to tubulin incorporated into axonemes (cilia and flagella) whereas glutamylation is prevalent in neuronal cells, centrioles, axonemes, and the mitotic spindle. Both modifications can coexist on the same protein on adjacent residues, and lowering polyglycylation levels increases polyglutamylation, and reciprocally. The precise function of polyglycylation is still unclear. Some glutamate residues at the C-terminus are polyglutamylated, resulting in polyglutamate chains on the gamma-carboxyl group. Polyglutamylation plays a key role in microtubule severing by spastin (SPAST). SPAST preferentially recognizes and acts on microtubules decorated with short polyglutamate tails: severing activity by SPAST increases as the number of glutamates per tubulin rises from one to eight, but decreases beyond this glutamylation threshold. In terms of tissue distribution, brain.

The protein localises to the cytoplasm. The protein resides in the cytoskeleton. In terms of biological role, tubulin is the major constituent of microtubules, a cylinder consisting of laterally associated linear protofilaments composed of alpha- and beta-tubulin heterodimers. Microtubules grow by the addition of GTP-tubulin dimers to the microtubule end, where a stabilizing cap forms. Below the cap, tubulin dimers are in GDP-bound state, owing to GTPase activity of alpha-tubulin. This Notothenia neglecta (Yellowbelly rockcod) protein is Tubulin beta-1 chain (tubb1).